Here is a 557-residue protein sequence, read N- to C-terminus: Membrane protein insertase YidC (557 aa).

The chain crosses the membrane as a helical span at residues 7–27 (ILLVALAVVSYLLVLQWNQDY). The tract at residues 42–77 (ASPALPETVPGDSSTSADVPTAGSGNQVPDSAASTA) is disordered. Residues 52 to 77 (GDSSTSADVPTAGSGNQVPDSAASTA) show a composition bias toward polar residues. 3 consecutive transmembrane segments (helical) span residues 370–390 (WGWS…PLSA), 436–456 (LGGC…YWVL), and 514–534 (PIIF…YWVV).

Belongs to the OXA1/ALB3/YidC family. Type 1 subfamily. In terms of assembly, interacts with the Sec translocase complex via SecD. Specifically interacts with transmembrane segments of nascent integral membrane proteins during membrane integration.

It is found in the cell inner membrane. Functionally, required for the insertion and/or proper folding and/or complex formation of integral membrane proteins into the membrane. Involved in integration of membrane proteins that insert both dependently and independently of the Sec translocase complex, as well as at least some lipoproteins. Aids folding of multispanning membrane proteins. The sequence is that of Membrane protein insertase YidC from Azotobacter vinelandii (strain DJ / ATCC BAA-1303).